The primary structure comprises 298 residues: Probable D,D-dipeptide transport system permease protein DdpC (298 aa).

Over 1 to 33 (MMLSEETSAVRPQKQTRFNGAKLVWMLKGSPLT) the chain is Cytoplasmic. Residues 34–54 (VTSAVIIVLMLLMMIFSPWLA) form a helical membrane-spanning segment. Residues 55-96 (THDPNAIDLTARLLPPSAAHWFGTDEVGRDLFSRVLVGSQQS) lie on the Periplasmic side of the membrane. The chain crosses the membrane as a helical span at residues 97–117 (ILAGLVVVAIAGMIGSLLGCL). Residues 97-282 (ILAGLVVVAI…LTAVGFNLFG (186 aa)) enclose the ABC transmembrane type-1 domain. Residues 118 to 124 (SGVLGGR) are Cytoplasmic-facing. 2 helical membrane passes run 125–145 (ADAIIMRIMDIMLSIPSLVLT) and 146–166 (MALAAALGPSLFNAMLAIAIV). Over 167–217 (RIPFYVRLARGQALVVRQYTYVQAAKTFGASRWHLINWHILRNSLPPLIVQ) the chain is Cytoplasmic. A helical membrane pass occupies residues 218–238 (ASLDIGSAILMAATLGFIGLG). Residues 239–260 (AQQPSAEWGAMVANGRNYVLDQ) lie on the Periplasmic side of the membrane. A helical transmembrane segment spans residues 261–281 (WWYCAFPGAAILLTAVGFNLF). Residues 282–298 (GDGIRDLLDPKAGGKQS) lie on the Cytoplasmic side of the membrane.

It belongs to the binding-protein-dependent transport system permease family. OppBC subfamily. As to quaternary structure, the complex is composed of two ATP-binding proteins (DdpD and DdpF), two transmembrane proteins (DdpB and DdpC) and a solute-binding protein (DdpA).

Its subcellular location is the cell inner membrane. Part of the ABC transporter complex DdpABCDF, which is probably involved in D,D-dipeptide transport. Probably responsible for the translocation of the substrate across the membrane. The protein is Probable D,D-dipeptide transport system permease protein DdpC (ddpC) of Escherichia coli (strain K12).